We begin with the raw amino-acid sequence, 288 residues long: Adenylate kinase (288 aa).

65 to 70 (GVGKGT) is an ATP binding site. Residues 85–114 (ATGDLVRDELKSSGPLSKQLAEIVNQGKLV) are NMP. AMP-binding positions include threonine 86, arginine 91, 112 to 114 (KLV), 142 to 145 (GFPR), and glutamine 149. Residues 178 to 226 (GRRICSECGKNFNVASIDVAGENGAPRISMARLNPPFTVCFKLITRADD) are LID. Arginine 179 is an ATP binding site. AMP contacts are provided by arginine 223 and arginine 234. Glycine 262 serves as a coordination point for ATP.

This sequence belongs to the adenylate kinase family. As to quaternary structure, monomer.

Its subcellular location is the cytoplasm. It carries out the reaction AMP + ATP = 2 ADP. Catalyzes the reversible transfer of the terminal phosphate group between ATP and AMP. Plays an important role in cellular energy homeostasis and in adenine nucleotide metabolism. The protein is Adenylate kinase (ADK) of Solanum tuberosum (Potato).